Consider the following 328-residue polypeptide: MIQITGRKFKLEEQVEHEDHYYARYSLSPLEKGYAVTVGNTLRRVLLSSIPSFAITDVRFVKPEKYHEFDTIEGAKEDIMDILLNLKKVQLRVDTYVESPVKLTINKKGPGVLTAGDIECPAGVVVVNPGHYLATLNEDADLEIELYATFGKGFVPAADRNERPEIGWIVLDGVYSPVIKVNWLVENVRVDKRTDYEKLILEIWTKKSIKPSEALKHSLKIILDHFMFIEQSLSDVEELPIPIIQETAVVTEEIGSPEDVMSKKVEELELSARSLNCLKRDKIETIGDLLSRTEEELMKIKNFGLKSLEEVREKLRDKFGLSLRKGDK.

Residues 1 to 230 (MIQITGRKFK…IILDHFMFIE (230 aa)) form an alpha N-terminal domain (alpha-NTD) region. The alpha C-terminal domain (alpha-CTD) stretch occupies residues 257–328 (PEDVMSKKVE…FGLSLRKGDK (72 aa)).

The protein belongs to the RNA polymerase alpha chain family. Homodimer. The RNAP catalytic core consists of 2 alpha, 1 beta, 1 beta' and 1 omega subunit. When a sigma factor is associated with the core the holoenzyme is formed, which can initiate transcription.

It catalyses the reaction RNA(n) + a ribonucleoside 5'-triphosphate = RNA(n+1) + diphosphate. Its function is as follows. DNA-dependent RNA polymerase catalyzes the transcription of DNA into RNA using the four ribonucleoside triphosphates as substrates. The protein is DNA-directed RNA polymerase subunit alpha of Fervidobacterium nodosum (strain ATCC 35602 / DSM 5306 / Rt17-B1).